We begin with the raw amino-acid sequence, 391 residues long: Geranylgeranyl diphosphate reductase (391 aa).

It belongs to the geranylgeranyl reductase family. ChlP subfamily.

The enzyme catalyses phytyl diphosphate + 3 NADP(+) = geranylgeranyl diphosphate + 3 NADPH + 3 H(+). Its pathway is porphyrin-containing compound metabolism; bacteriochlorophyll biosynthesis (light-independent). Its function is as follows. Catalyzes the stepwise hydrogenation of geranylgeraniol to phytol during bacteriochlorophyll A (BchlA) biosynthesis. This is Geranylgeranyl diphosphate reductase (bchP) from Rhodobacter capsulatus (strain ATCC BAA-309 / NBRC 16581 / SB1003).